The sequence spans 427 residues: tRNA(Ile)-lysidine synthase (427 aa).

An ATP-binding site is contributed by 27–32 (SGGVDS).

Belongs to the tRNA(Ile)-lysidine synthase family.

The protein resides in the cytoplasm. The enzyme catalyses cytidine(34) in tRNA(Ile2) + L-lysine + ATP = lysidine(34) in tRNA(Ile2) + AMP + diphosphate + H(+). Its function is as follows. Ligates lysine onto the cytidine present at position 34 of the AUA codon-specific tRNA(Ile) that contains the anticodon CAU, in an ATP-dependent manner. Cytidine is converted to lysidine, thus changing the amino acid specificity of the tRNA from methionine to isoleucine. The polypeptide is tRNA(Ile)-lysidine synthase (Streptococcus equi subsp. zooepidemicus (strain H70)).